The sequence spans 440 residues: Probable D-serine dehydratase (440 aa).

K120 carries the N6-(pyridoxal phosphate)lysine modification.

The protein belongs to the serine/threonine dehydratase family. DsdA subfamily. Pyridoxal 5'-phosphate serves as cofactor.

The catalysed reaction is D-serine = pyruvate + NH4(+). The polypeptide is Probable D-serine dehydratase (Shouchella clausii (strain KSM-K16) (Alkalihalobacillus clausii)).